A 208-amino-acid polypeptide reads, in one-letter code: Glycerol-3-phosphate acyltransferase (208 aa).

Helical transmembrane passes span 7-27 (PNIHFYLLAYFIGGIPFGYLL), 63-83 (MMAALTMLLDALKGALVILVA), 86-106 (AGMSVETQWAIAVLAVVGHCF), 123-143 (GVMAVMLPLEAAIGLVVWLVV), 149-169 (ISSLSSLLGLGALLISSFLIH), and 170-190 (PEIPEIGTHAPLLIIAFVIFY).

Belongs to the PlsY family. In terms of assembly, probably interacts with PlsX.

The protein localises to the cell inner membrane. The enzyme catalyses an acyl phosphate + sn-glycerol 3-phosphate = a 1-acyl-sn-glycero-3-phosphate + phosphate. The protein operates within lipid metabolism; phospholipid metabolism. Its function is as follows. Catalyzes the transfer of an acyl group from acyl-phosphate (acyl-PO(4)) to glycerol-3-phosphate (G3P) to form lysophosphatidic acid (LPA). This enzyme utilizes acyl-phosphate as fatty acyl donor, but not acyl-CoA or acyl-ACP. This chain is Glycerol-3-phosphate acyltransferase, found in Wolinella succinogenes (strain ATCC 29543 / DSM 1740 / CCUG 13145 / JCM 31913 / LMG 7466 / NCTC 11488 / FDC 602W) (Vibrio succinogenes).